Consider the following 822-residue polypeptide: MKNRSSSPPLHVHVDENTPVHVHIKKGQKTTPAKCQQKHKQKMKGNTVNVRRAVQVKTKAPWMPPGKTSVLDSTYKWEGPTHLLEITPPESEKMMSVLRLSDLSTDEEDAVCCKMNEYERKIDSLMNVVGTLKNEAKLQKQEQRQQMTKRLLEEQKEELNEVTQELAESEHENTLLRRNIERMREEKDLTMLQKKYLQHEKECLLSKLSEAERDGAAAAREIHALKSTIERLNVEKHMSSSDINMLTRQKELLLQKLSTFEETNRTLRELLREQHERERDVQKILEKQGVLMKMLADSDAEKLQLQMRLQDKEKEINNLAVQIQEEKEQARTASELSKSLESVRGHLQAQLRHKEAENNRLTTQIRNLERSEAQHKAEVECIKDQLKELRQKADRDKDALKRALRAQKERAERSEECAGQLAVQLAEKDSYVAEALSTLESWRSRYNKVVKDKSDLELEMVTVNSRIADLLEQQATLEDKMREDRDALMDKLHQQTTETTSFRMENERLKASVVPMEEKLNQAHVEVQQLKSSVRNYEDLIETYKSQVLKTRMEAADVAAKLEKCDNEKKALKDEMNKELELARKQFQSQLAELEKLPEILRITETQLAECQDQLQSYEKKNMDLSVMIADLRQRIELQGDKMEMTRERYQSAQEEKKQLTLKAEELERKLETTSTQNIEFLQVIAKREESIHQCQLRLEEKTRECSSLARQLEMAIEDAKREVEQTRERATSRERAAQSKVLDLETQLSRTKTELNQLRRNKEDAERRYESRLQDLKDRLEQSESTNRSMQNYVQFLKSSYANVFADSALLGSPGRSRSSP.

Residues 26 to 45 (KGQKTTPAKCQQKHKQKMKG) form a disordered region. Coiled-coil stretches lie at residues 113–418 (CKMN…EECA), 452–490 (DKSD…ALMD), and 516–796 (MEEK…NYVQ).

It belongs to the ODF2 family. In terms of assembly, self-associates. Associates with microtubules and forms a fibrillar structure partially linked to the microtubule network.

It localises to the cytoplasm. Its subcellular location is the cytoskeleton. It is found in the microtubule organizing center. The protein resides in the centrosome. The protein localises to the cell projection. It localises to the cilium. Its subcellular location is the centriole. It is found in the spindle pole. The protein resides in the flagellum. Functionally, seems to be a major component of sperm tail outer dense fibers (ODF). ODFs are filamentous structures located on the outside of the axoneme in the midpiece and principal piece of the mammalian sperm tail and may help to maintain the passive elastic structures and elastic recoil of the sperm tail. The polypeptide is Outer dense fiber protein 2 (ODF2) (Gallus gallus (Chicken)).